A 513-amino-acid polypeptide reads, in one-letter code: ATP synthase subunit alpha (513 aa).

ATP is bound at residue 169–176 (GDRQIGKT).

The protein belongs to the ATPase alpha/beta chains family. F-type ATPases have 2 components, CF(1) - the catalytic core - and CF(0) - the membrane proton channel. CF(1) has five subunits: alpha(3), beta(3), gamma(1), delta(1), epsilon(1). CF(0) has three main subunits: a(1), b(2) and c(9-12). The alpha and beta chains form an alternating ring which encloses part of the gamma chain. CF(1) is attached to CF(0) by a central stalk formed by the gamma and epsilon chains, while a peripheral stalk is formed by the delta and b chains.

The protein localises to the cell inner membrane. It catalyses the reaction ATP + H2O + 4 H(+)(in) = ADP + phosphate + 5 H(+)(out). Produces ATP from ADP in the presence of a proton gradient across the membrane. The alpha chain is a regulatory subunit. The polypeptide is ATP synthase subunit alpha (Francisella tularensis subsp. tularensis (strain SCHU S4 / Schu 4)).